The chain runs to 351 residues: Protein disulfide isomerase CRELD2 (351 aa).

Residues 1–21 (MRPPAPAVLGLLLLLLPTGEA) form the signal peptide. The short motif at 28–31 (CKRC) is the CXXC element. 4 cysteine pairs are disulfide-bonded: C28-C31, C137-C151, C145-C163, and C165-C174. The EGF-like 1 domain maps to 133 to 175 (DCLACQGGSERPCSGNGHCVGDGTREGDGSCQCHLGYQGPLCS). One copy of the FU 1 repeat lies at 190 to 237 (HSICSACDEACKTCVGPTNRDCGQCEVGWVRQDDACVDVDECAAEPPP). The N-linked (GlcNAc...) asparagine glycan is linked to N248. The FU 2 repeat unit spans residues 250 to 297 (SFVCEECDPTCMGCTGKGPTQCRECIAGYSKESGQCEDIDECSLAEKP). A CXXC motif is present at residues 260–263 (CMGC). 4 disulfide bridges follow: C260–C263, C291–C305, C298–C314, and C316–C327. The region spanning 287 to 328 (DIDECSLAEKPCLRDNENCYNTPGSFVCVCPDGFEEAEDTCV) is the EGF-like 2; calcium-binding domain. Residues 329-351 (QTRPAGAEATEASPTQPPSREDL) are disordered.

This sequence belongs to the CRELD family. As to quaternary structure, interacts with CHRNA4. Component of a complex containing at least CRELD2, MANF, MATN3 and PDIA4.

The protein localises to the endoplasmic reticulum. The enzyme catalyses Catalyzes the rearrangement of -S-S- bonds in proteins.. Its function is as follows. Protein disulfide isomerase. Might play a role in the unfolded protein response. May regulate transport of alpha4-beta2 neuronal acetylcholine receptor. The sequence is that of Protein disulfide isomerase CRELD2 (CRELD2) from Bos taurus (Bovine).